The following is a 365-amino-acid chain: Geissoschizine synthase (365 aa).

Cysteine 51 serves as a coordination point for Zn(2+). Asparagine 52 is a binding site for NADP(+). The Zn(2+) site is built by histidine 73, glutamate 74, cysteine 104, cysteine 107, cysteine 110, cysteine 118, and cysteine 169. NADP(+) is bound by residues leucine 195, glycine 197, leucine 198, serine 217, threonine 218, serine 219, lysine 222, arginine 262, valine 281, alanine 283, serine 305, threonine 307, and arginine 352.

It belongs to the zinc-containing alcohol dehydrogenase family. Class-III subfamily. As to quaternary structure, homodimer. Zn(2+) serves as cofactor. As to expression, mainly expressed in roots and, to a lower level, in leaves.

It carries out the reaction (19E)-geissoschizine + NADP(+) = 4,21-dehydrogeissoschizine + NADPH. It participates in alkaloid biosynthesis; ajmaline biosynthesis. Alcohol dehydrogenase involved in the biosynthesis of ajmaline-type monoterpenoid indole alkaloids (MIAs) natural products, important plant-derived pharmaceuticals used in the therapy of heart disorders. Catalyzes iminium reduction on 4,21-dehydrogeissoschizine to produce 19E-geissoschizine, precursor of vomilenine, an intermediate chemical in the biosynthesis of ajmaline. The polypeptide is Geissoschizine synthase (Rauvolfia serpentina (Serpentine wood)).